A 199-amino-acid polypeptide reads, in one-letter code: Charged multivesicular body protein 1b (199 aa).

Coiled coils occupy residues 10-30 and 178-199; these read NLKF…KEEK and TSVA…RDQV. The disordered stretch occupies residues 167–199; the sequence is ELPQGQTGSVGTSVASAEQDELSQRLAKLRDQV. The span at 170–182 shows a compositional bias: polar residues; that stretch reads QGQTGSVGTSVAS. The MIT-interacting motif signature appears at 186–196; the sequence is DELSQRLAKLR.

It belongs to the SNF7 family. Probable peripherally associated component of the endosomal sorting required for transport complex III (ESCRT-III).

Its subcellular location is the cytoplasm. The protein resides in the cytosol. The protein localises to the endosome. It localises to the late endosome membrane. Functionally, probable peripherally associated component of the endosomal sorting required for transport complex III (ESCRT-III) which is involved in multivesicular bodies (MVBs) formation and sorting of endosomal cargo proteins into MVBs. MVBs contain intraluminal vesicles (ILVs) that are generated by invagination and scission from the limiting membrane of the endosome and mostly are delivered to lysosomes enabling degradation of membrane proteins, such as stimulated growth factor receptors, lysosomal enzymes and lipids. The protein is Charged multivesicular body protein 1b (chmp1b) of Danio rerio (Zebrafish).